Reading from the N-terminus, the 513-residue chain is GMP synthase [glutamine-hydrolyzing] (513 aa).

In terms of domain architecture, Glutamine amidotransferase type-1 spans 5 to 195; it reads LVLVIDFGGQ…VYNICGCTGD (191 aa). Cys-82 serves as the catalytic Nucleophile. Active-site residues include His-169 and Glu-171. In terms of domain architecture, GMPS ATP-PPase spans 196–388; sequence WKMDSFVEKT…LGIPEKLVFR (193 aa). 223–229 serves as a coordination point for ATP; sequence SGGVDSS.

In terms of assembly, homodimer.

It carries out the reaction XMP + L-glutamine + ATP + H2O = GMP + L-glutamate + AMP + diphosphate + 2 H(+). It participates in purine metabolism; GMP biosynthesis; GMP from XMP (L-Gln route): step 1/1. Catalyzes the synthesis of GMP from XMP. The protein is GMP synthase [glutamine-hydrolyzing] of Clostridium botulinum (strain Alaska E43 / Type E3).